The chain runs to 164 residues: ATP synthase subunit b (164 aa).

Residues 4 to 24 (IHFDLTLVVQVLSFLLLVYIL) traverse the membrane as a helical segment.

The protein belongs to the ATPase B chain family. As to quaternary structure, F-type ATPases have 2 components, F(1) - the catalytic core - and F(0) - the membrane proton channel. F(1) has five subunits: alpha(3), beta(3), gamma(1), delta(1), epsilon(1). F(0) has three main subunits: a(1), b(2) and c(10-14). The alpha and beta chains form an alternating ring which encloses part of the gamma chain. F(1) is attached to F(0) by a central stalk formed by the gamma and epsilon chains, while a peripheral stalk is formed by the delta and b chains.

It is found in the cell membrane. Its function is as follows. F(1)F(0) ATP synthase produces ATP from ADP in the presence of a proton or sodium gradient. F-type ATPases consist of two structural domains, F(1) containing the extramembraneous catalytic core and F(0) containing the membrane proton channel, linked together by a central stalk and a peripheral stalk. During catalysis, ATP synthesis in the catalytic domain of F(1) is coupled via a rotary mechanism of the central stalk subunits to proton translocation. In terms of biological role, component of the F(0) channel, it forms part of the peripheral stalk, linking F(1) to F(0). The protein is ATP synthase subunit b of Desulfitobacterium hafniense (strain Y51).